Reading from the N-terminus, the 564-residue chain is Probable pectinesterase/pectinesterase inhibitor 46 (564 aa).

A helical transmembrane segment spans residues 25-45 (IAIIAISSIVLVCIVVGAVVG). Residues 62 to 207 (EPISVSVKAL…TEMTSNALAI (146 aa)) are pectinesterase inhibitor 46. N-linked (GlcNAc...) asparagine glycosylation is found at asparagine 90, asparagine 126, asparagine 147, and asparagine 196. A pectinesterase 46 region spans residues 257-550 (TIVVAKDGSG…FTVKPFIDGN (294 aa)). The substrate site is built by threonine 332 and glutamine 362. Aspartate 385 serves as the catalytic Proton donor; for pectinesterase activity. A disulfide bridge links cysteine 399 with cysteine 419. Aspartate 406 (nucleophile; for pectinesterase activity) is an active-site residue. N-linked (GlcNAc...) asparagine glycans are attached at residues asparagine 452 and asparagine 460. 2 residues coordinate substrate: arginine 470 and tryptophan 472.

This sequence in the N-terminal section; belongs to the PMEI family. The protein in the C-terminal section; belongs to the pectinesterase family.

It localises to the membrane. It catalyses the reaction [(1-&gt;4)-alpha-D-galacturonosyl methyl ester](n) + n H2O = [(1-&gt;4)-alpha-D-galacturonosyl](n) + n methanol + n H(+). The protein operates within glycan metabolism; pectin degradation; 2-dehydro-3-deoxy-D-gluconate from pectin: step 1/5. Functionally, acts in the modification of cell walls via demethylesterification of cell wall pectin. The sequence is that of Probable pectinesterase/pectinesterase inhibitor 46 (PME46) from Arabidopsis thaliana (Mouse-ear cress).